Reading from the N-terminus, the 454-residue chain is Maintenance of mitochondrial morphology protein 1 (454 aa).

The Lumenal segment spans residues 1-128 (MSMVIGIGDL…QSSGWGFAHG (128 aa)). Residues 129–149 (LLVGQLSVVAVLAFFIKFFIF) traverse the membrane as a helical segment. Residues 150 to 454 (GNSSMARPLM…SESETAVDSN (305 aa)) lie on the Cytoplasmic side of the membrane. The SMP-LTD domain maps to 207–430 (QSESLDWFNV…EPRFQLIELP (224 aa)).

Belongs to the MMM1 family. Homodimer. Component of the ER-mitochondria encounter structure (ERMES) or MDM complex, composed of MMM1, MDM10, MDM12 and MDM34. An MMM1 homodimer associates with one molecule of MDM12 on each side in a pairwise head-to-tail manner, and the SMP-LTD domains of MMM1 and MDM12 generate a continuous hydrophobic tunnel for phospholipid trafficking.

Its subcellular location is the endoplasmic reticulum membrane. Functionally, component of the ERMES/MDM complex, which serves as a molecular tether to connect the endoplasmic reticulum (ER) and mitochondria. Components of this complex are involved in the control of mitochondrial shape and protein biogenesis, and function in nonvesicular lipid trafficking between the ER and mitochondria. The MDM12-MMM1 subcomplex functions in the major beta-barrel assembly pathway that is responsible for biogenesis of all outer membrane beta-barrel proteins, and acts in a late step after the SAM complex. The MDM10-MDM12-MMM1 subcomplex further acts in the TOM40-specific pathway after the action of the MDM12-MMM1 complex. Essential for establishing and maintaining the structure of mitochondria and maintenance of mtDNA nucleoids. The chain is Maintenance of mitochondrial morphology protein 1 from Komagataella phaffii (strain GS115 / ATCC 20864) (Yeast).